Reading from the N-terminus, the 338-residue chain is D-alanine--D-alanine ligase (338 aa).

Residues 120–324 (KRVMLAEGLP…YEDLCIEVLK (205 aa)) enclose the ATP-grasp domain. Residue 150-205 (PDKLGLPLIVKPAREGSSIGLTKVTERAGMADAVAQAEKLDADILCEQFISGDEVT) participates in ATP binding. 3 residues coordinate Mg(2+): Asp-277, Glu-291, and Asn-293.

It belongs to the D-alanine--D-alanine ligase family. Mg(2+) is required as a cofactor. Requires Mn(2+) as cofactor.

The protein localises to the cytoplasm. It carries out the reaction 2 D-alanine + ATP = D-alanyl-D-alanine + ADP + phosphate + H(+). Its pathway is cell wall biogenesis; peptidoglycan biosynthesis. Its function is as follows. Cell wall formation. The polypeptide is D-alanine--D-alanine ligase (Polaromonas sp. (strain JS666 / ATCC BAA-500)).